A 312-amino-acid polypeptide reads, in one-letter code: Acetyl-coenzyme A carboxylase carboxyl transferase subunit alpha (312 aa).

Residues 36–286 (ELEKEIEKTF…KTYFLESVKA (251 aa)) enclose the CoA carboxyltransferase C-terminal domain.

The protein belongs to the AccA family. Acetyl-CoA carboxylase is a heterohexamer composed of biotin carboxyl carrier protein (AccB), biotin carboxylase (AccC) and two subunits each of ACCase subunit alpha (AccA) and ACCase subunit beta (AccD).

Its subcellular location is the cytoplasm. It catalyses the reaction N(6)-carboxybiotinyl-L-lysyl-[protein] + acetyl-CoA = N(6)-biotinyl-L-lysyl-[protein] + malonyl-CoA. It participates in lipid metabolism; malonyl-CoA biosynthesis; malonyl-CoA from acetyl-CoA: step 1/1. Component of the acetyl coenzyme A carboxylase (ACC) complex. First, biotin carboxylase catalyzes the carboxylation of biotin on its carrier protein (BCCP) and then the CO(2) group is transferred by the carboxyltransferase to acetyl-CoA to form malonyl-CoA. This is Acetyl-coenzyme A carboxylase carboxyl transferase subunit alpha from Sulfurovum sp. (strain NBC37-1).